Reading from the N-terminus, the 265-residue chain is MKNQKIIAIYGKGGIGKSSTASNVAAACAEAGKKVMIIGCDPKSDSSITLLRGRRIPTILDLLREGVDIKKEDVVFEGYAGVKCVEAGGPEPGIGCAGRGIIVAIQKLKSISGNLLKEQDLIIYDVPGDIVCGGFVAPVRKGFVNEAYVLTSGEYMPLYAANNICKGLSKIGMPLSGVICNSRNVSREEEIVSKFSEEIGSQLMAFIPKRQVVQDCEREGYSVMEKAPESDIAEIYRKLGKAILENEKRVTADSLSDERLRELTK.

This sequence belongs to the NifH/BchL/ChlL family. As to quaternary structure, homodimer. The Ni-sirohydrochlorin a,c-diamide reductive cyclase complex is composed of a NifH homolog component CfbC and a NifD homolog component CfbD. It depends on [4Fe-4S] cluster as a cofactor.

The enzyme catalyses Ni-sirohydrochlorin a,c-diamide + 3 AH2 + ATP + H2O = 15,17(3)-seco-F430-17(3)-acid + 3 A + ADP + phosphate. Its function is as follows. Involved in the biosynthesis of the unique nickel-containing tetrapyrrole coenzyme F430, the prosthetic group of methyl-coenzyme M reductase (MCR), which plays a key role in methanogenesis and anaerobic methane oxidation. Catalyzes both the six-electron reduction of the tetrahydroporphyrin ring system and the gamma-lactamization of the c-acetamide side chain of Ni-sirohydrochlorin a,c-diamide to yield 15,17(3)-seco-F430-17(3)-acid (seco-F430), the last intermediate in the biosynthesis of the coenzyme F430. The protein is Ni-sirohydrochlorin a,c-diamide reductive cyclase complex, component CfbC of Methanosarcina barkeri (strain Fusaro / DSM 804).